A 481-amino-acid polypeptide reads, in one-letter code: Glutamyl-tRNA(Gln) amidotransferase subunit A (481 aa).

Active-site charge relay system residues include K75 and S150. S174 functions as the Acyl-ester intermediate in the catalytic mechanism.

This sequence belongs to the amidase family. GatA subfamily. In terms of assembly, heterotrimer of A, B and C subunits.

The enzyme catalyses L-glutamyl-tRNA(Gln) + L-glutamine + ATP + H2O = L-glutaminyl-tRNA(Gln) + L-glutamate + ADP + phosphate + H(+). Allows the formation of correctly charged Gln-tRNA(Gln) through the transamidation of misacylated Glu-tRNA(Gln) in organisms which lack glutaminyl-tRNA synthetase. The reaction takes place in the presence of glutamine and ATP through an activated gamma-phospho-Glu-tRNA(Gln). This Macrococcus caseolyticus (strain JCSC5402) (Macrococcoides caseolyticum) protein is Glutamyl-tRNA(Gln) amidotransferase subunit A.